Here is a 403-residue protein sequence, read N- to C-terminus: MAKLIVDDLDVKGKKVLVRVDFNVPIKDGVIGDDNRIVAALPTIKYIIEHGGKAILLSHLGRVKSDADKKELSLKPVAERLSELLKKPVTFVPSNEGKEVEDAINNMKDGDVVVLENTRFQDIDNDFGKRESGNDPKLGEYWASLGDMFVNDAFGTAHRSHASNVGIATAMKGNGKLAAAGYLLEKEIKYLGDAVDNPVHPFVTILGGAKVSDKIGVINNLIPKSDHILIGGGMAYTFLAAQGHEIGKSLFEADKVDLAKELLEKAGDKIVLPVDNVAATEFSNDASREVVGDDIPDNMMGLDIGPKTIAKFKDILKDAKTVVWNGPMGAFEMPNFAEGTLEIGRALANLTDATTIIGGGDSTAAAKQLGIAPKISHISTGGGASLNYLEGKVLPGIACVQDK.

Substrate-binding positions include 21-23 (DFN), R36, 59-62 (HLGR), R119, and R159. Residues K214, G301, E332, and 359–362 (GGDS) each bind ATP.

Belongs to the phosphoglycerate kinase family. Monomer.

The protein resides in the cytoplasm. It catalyses the reaction (2R)-3-phosphoglycerate + ATP = (2R)-3-phospho-glyceroyl phosphate + ADP. It participates in carbohydrate degradation; glycolysis; pyruvate from D-glyceraldehyde 3-phosphate: step 2/5. This is Phosphoglycerate kinase from Lactobacillus helveticus (strain DPC 4571).